We begin with the raw amino-acid sequence, 172 residues long: Adrenodoxin-like protein 1, mitochondrial (172 aa).

In terms of domain architecture, 2Fe-2S ferredoxin-type spans Val-57 to Thr-159. The [2Fe-2S] cluster site is built by Cys-94, Cys-100, Cys-103, and Cys-140.

This sequence belongs to the adrenodoxin/putidaredoxin family. Requires [2Fe-2S] cluster as cofactor.

Its subcellular location is the mitochondrion matrix. In terms of biological role, required for ecdysteroidogenesis in the prothoracic gland which is necessary for larval to pupal transition. This Drosophila melanogaster (Fruit fly) protein is Adrenodoxin-like protein 1, mitochondrial.